Reading from the N-terminus, the 240-residue chain is Triosephosphate isomerase (240 aa).

9 to 11 is a binding site for substrate; the sequence is NWK. Histidine 94 serves as the catalytic Electrophile. Catalysis depends on glutamate 163, which acts as the Proton acceptor. Residues glycine 169, serine 202, and 223–224 each bind substrate; that span reads GG.

Belongs to the triosephosphate isomerase family. In terms of assembly, homodimer.

It is found in the cytoplasm. The catalysed reaction is D-glyceraldehyde 3-phosphate = dihydroxyacetone phosphate. It participates in carbohydrate biosynthesis; gluconeogenesis. It functions in the pathway carbohydrate degradation; glycolysis; D-glyceraldehyde 3-phosphate from glycerone phosphate: step 1/1. Its function is as follows. Involved in the gluconeogenesis. Catalyzes stereospecifically the conversion of dihydroxyacetone phosphate (DHAP) to D-glyceraldehyde-3-phosphate (G3P). The polypeptide is Triosephosphate isomerase (Gloeobacter violaceus (strain ATCC 29082 / PCC 7421)).